The following is a 76-amino-acid chain: U14-hexatoxin-Hi1a (76 aa).

A signal peptide spans 1–18 (MMQLAVLICLSLVVNTFA). Disulfide bonds link C21-C34, C27-C39, and C33-C61.

In terms of tissue distribution, expressed by the venom gland.

It is found in the secreted. Probable ion channel inhibitor. This Hadronyche infensa (Fraser island funnel-web spider) protein is U14-hexatoxin-Hi1a.